A 744-amino-acid polypeptide reads, in one-letter code: Vesicle-fusing ATPase (744 aa).

An N6-acetyllysine modification is found at Lys105. Position 207 is a phosphoserine (Ser207). At Tyr259 the chain carries Phosphotyrosine. ATP-binding positions include 505–510 (NGIIKW) and 545–552 (PHSGKTAL). A Mg(2+)-binding site is contributed by Thr550. Position 569 is a phosphoserine; by CDK16 (Ser569).

This sequence belongs to the AAA ATPase family. In terms of assembly, homohexamer. Interacts with GABARAP and GABARAPL2. Interacts with GRIA2. Interacts with PLK2, leading to disrupt the interaction with GRIA2. Interacts with MUSK; may regulate MUSK endocytosis and activity. Interacts with CDK16. The cofactor is Mg(2+). Post-translationally, phosphorylation at Ser-569 interferes with homohexamerization. As to expression, detected in brain (at protein level).

The protein resides in the cytoplasm. It catalyses the reaction ATP + H2O = ADP + phosphate + H(+). Required for vesicle-mediated transport. Catalyzes the fusion of transport vesicles within the Golgi cisternae. Is also required for transport from the endoplasmic reticulum to the Golgi stack. Seems to function as a fusion protein required for the delivery of cargo proteins to all compartments of the Golgi stack independent of vesicle origin. Interaction with AMPAR subunit GRIA2 leads to influence GRIA2 membrane cycling. This Rattus norvegicus (Rat) protein is Vesicle-fusing ATPase (Nsf).